The following is a 194-amino-acid chain: MIIIDTGCANLSSVKFAFDRLNIKAEISRDIATIKSADKLLLPGVGTAMAAMKILQDRNLIETIQNATQPMLGICLGMQLMTEYSSEGNVPTLSLMSGHTDLIPNTGLPLPHMGWNKVRYEQDHPLFAGIEQDSHFYFVHSYAVLPNEHTIATSDYGVPFSAALGCKNFYGVQFHPERSGKNGAQLLKNFVENL.

The Glutamine amidotransferase type-1 domain maps to 1 to 194 (MIIIDTGCAN…QLLKNFVENL (194 aa)). The Nucleophile role is filled by C75. Residues H175 and E177 contribute to the active site.

In terms of assembly, heterodimer of HisH and HisF.

It is found in the cytoplasm. It carries out the reaction 5-[(5-phospho-1-deoxy-D-ribulos-1-ylimino)methylamino]-1-(5-phospho-beta-D-ribosyl)imidazole-4-carboxamide + L-glutamine = D-erythro-1-(imidazol-4-yl)glycerol 3-phosphate + 5-amino-1-(5-phospho-beta-D-ribosyl)imidazole-4-carboxamide + L-glutamate + H(+). The catalysed reaction is L-glutamine + H2O = L-glutamate + NH4(+). It functions in the pathway amino-acid biosynthesis; L-histidine biosynthesis; L-histidine from 5-phospho-alpha-D-ribose 1-diphosphate: step 5/9. IGPS catalyzes the conversion of PRFAR and glutamine to IGP, AICAR and glutamate. The HisH subunit catalyzes the hydrolysis of glutamine to glutamate and ammonia as part of the synthesis of IGP and AICAR. The resulting ammonia molecule is channeled to the active site of HisF. The chain is Imidazole glycerol phosphate synthase subunit HisH from Mannheimia succiniciproducens (strain KCTC 0769BP / MBEL55E).